The chain runs to 529 residues: Autophagy-related protein 21 (529 aa).

A compositionally biased stretch (polar residues) spans 49 to 62; it reads NSLEDSAGCQNPTH. The interval 49–70 is disordered; the sequence is NSLEDSAGCQNPTHSKTDSQDT. WD repeat units lie at residues 271–311 and 321–361; these read AHHS…GKVK and GHNL…SDIC. The L/FRRG motif motif lies at 318–322; the sequence is LRRGH. The tract at residues 362-388 is disordered; the sequence is TNENSEDRTNHNSDYEDSDGDTSKSSE. Over residues 366 to 375 the composition is skewed to basic and acidic residues; that stretch reads SEDRTNHNSD.

The protein belongs to the WD repeat PROPPIN family.

The protein localises to the cytoplasm. Its subcellular location is the membrane. The protein resides in the vacuole membrane. Required for cytoplasm to vacuole transport (Cvt) vesicles formation and mitophagy. Involved in binding of phosphatidylethanolamine to ATG8 and in recruitment of ATG8 and ATG5 to the pre-autophagosomal structure. Protects ATG8 from ARG4-mediated cleavage. The protein is Autophagy-related protein 21 (ATG21) of Candida albicans (strain SC5314 / ATCC MYA-2876) (Yeast).